A 349-amino-acid chain; its full sequence is Succinylglutamate desuccinylase (349 aa).

Zn(2+)-binding residues include H70, E73, and H166. The active site involves E229.

Belongs to the AspA/AstE family. Succinylglutamate desuccinylase subfamily. Zn(2+) is required as a cofactor.

The catalysed reaction is N-succinyl-L-glutamate + H2O = L-glutamate + succinate. It participates in amino-acid degradation; L-arginine degradation via AST pathway; L-glutamate and succinate from L-arginine: step 5/5. Functionally, transforms N(2)-succinylglutamate into succinate and glutamate. In Burkholderia mallei (strain ATCC 23344), this protein is Succinylglutamate desuccinylase.